Reading from the N-terminus, the 174-residue chain is Small ribosomal subunit protein uS5 (174 aa).

An S5 DRBM domain is found at 19-82; sequence LREKMVAINR…DEARRKLKKI (64 aa).

It belongs to the universal ribosomal protein uS5 family. In terms of assembly, part of the 30S ribosomal subunit. Contacts proteins S4 and S8.

In terms of biological role, with S4 and S12 plays an important role in translational accuracy. Located at the back of the 30S subunit body where it stabilizes the conformation of the head with respect to the body. In Aromatoleum aromaticum (strain DSM 19018 / LMG 30748 / EbN1) (Azoarcus sp. (strain EbN1)), this protein is Small ribosomal subunit protein uS5.